Consider the following 418-residue polypeptide: Protein MAEA homolog (418 aa).

One can recognise a LisH domain in the interval 141–173 (NNTKLKRILVDYMLRMSYFETATKLSESSNIMD). The 58-residue stretch at 179–236 (IFREAKKVIDALKNREVASALTWCADNKTRLKKSKSKFEFQLRLQEFIELVRVDTAES) folds into the CTLH domain. The RING-Gid-type zinc finger occupies 330–403 (CTKEDPLSQE…NGGKITCPRT (74 aa)).

As to quaternary structure, interacts with RANBPM.

Its subcellular location is the cytoplasm. The polypeptide is Protein MAEA homolog (Arabidopsis thaliana (Mouse-ear cress)).